The sequence spans 460 residues: Allantoinase (460 aa).

Zn(2+) is bound by residues H70, H72, K157, H193, H250, and D323. K157 is subject to N6-carboxylysine.

The protein belongs to the metallo-dependent hydrolases superfamily. Allantoinase family. As to quaternary structure, homotetramer. The cofactor is Zn(2+). Post-translationally, carboxylation allows a single lysine to coordinate two zinc ions.

The enzyme catalyses (S)-allantoin + H2O = allantoate + H(+). The protein operates within nitrogen metabolism; (S)-allantoin degradation; allantoate from (S)-allantoin: step 1/1. Catalyzes the conversion of allantoin (5-ureidohydantoin) to allantoic acid by hydrolytic cleavage of the five-member hydantoin ring. Involved in the utilization of purines as secondary nitrogen sources, when primary sources are limiting. The chain is Allantoinase (DAL1) from Saccharomyces cerevisiae (strain ATCC 204508 / S288c) (Baker's yeast).